Consider the following 530-residue polypeptide: Glucose-6-phosphate isomerase (530 aa).

Glu-322 functions as the Proton donor in the catalytic mechanism. Residues His-351 and Lys-455 contribute to the active site.

The protein belongs to the GPI family.

The protein localises to the cytoplasm. The catalysed reaction is alpha-D-glucose 6-phosphate = beta-D-fructose 6-phosphate. It participates in carbohydrate biosynthesis; gluconeogenesis. It functions in the pathway carbohydrate degradation; glycolysis; D-glyceraldehyde 3-phosphate and glycerone phosphate from D-glucose: step 2/4. Its function is as follows. Catalyzes the reversible isomerization of glucose-6-phosphate to fructose-6-phosphate. This chain is Glucose-6-phosphate isomerase, found in Geobacter sp. (strain M21).